The following is a 638-amino-acid chain: MGKIIGIDLGTTNSCVAVMEGKETKVIPNAEGARTTPSIVAYADDGEVLVGDSAKRQAVTNPENTLFAIKRLIGRRADDAVVEKDKDMVSYKIIAADNGDAWVQVGDKKLSPQEVSARTLMKMKKTAEDYLGHEVTEAVITVPAYFNDSQRQATKDAGKIAGLEVKRIINEPTAAALAYGMDKVKADSKIAVYDLGGGTFDISIIEVADLDGEKQVEVLSTNGDTFLGGEDFDNVIVDYIATEFKKDQNVDLKLDKLALQRVREAAEKAKIELSSREQTDINLPYVTADATGPKHLNMKITRAKFESLIEGLVQRSIDPCKTALKDAGLSASEIDDVILVGGSTRVPMVQAAVKEFFGKEPRKDVNPDEAVAMGAAIQGGVLSGDVNDVLLLDVTPLSLGIETMGGVMTKLIEKNTTIPTRKSQTFSTAEDNQSAVTIHVLQGEREVSSGNKSLGQFNLDEIPPAPRGTPQIEVTFDIDANGILNVSAKDKATNKEQHITIQASSGLSEDEIEAMVKDAEAHAAEDAKLKELVEARNQADAMVHGTKKLLDEQGEGVEAAEKEAIEKAIADLEEAIKGDDKAVIDEKTQALATASQKLAEKAYAQPGAEAGAEQQGSANNADDDIVDAEFEEVNDDKK.

Thr-199 is modified (phosphothreonine; by autocatalysis). Residues 603–618 (YAQPGAEAGAEQQGSA) are compositionally biased toward low complexity. The disordered stretch occupies residues 603 to 638 (YAQPGAEAGAEQQGSANNADDDIVDAEFEEVNDDKK). Over residues 621–638 (ADDDIVDAEFEEVNDDKK) the composition is skewed to acidic residues.

This sequence belongs to the heat shock protein 70 family.

Its function is as follows. Acts as a chaperone. This Hydrogenovibrio crunogenus (strain DSM 25203 / XCL-2) (Thiomicrospira crunogena) protein is Chaperone protein DnaK.